The following is a 165-amino-acid chain: Chemotaxis protein CheW (165 aa).

This sequence belongs to the CheW family.

Its function is as follows. Plays an essential role in chemotaxis signal transduction system in order to colonize the host stomach. In Helicobacter pylori (strain ATCC 700392 / 26695) (Campylobacter pylori), this protein is Chemotaxis protein CheW.